The primary structure comprises 430 residues: Zinc carboxypeptidase A 1 (430 aa).

The first 22 residues, M1–A22, serve as a signal peptide directing secretion. Positions Q124 to V423 constitute a Peptidase M14 domain. Residues H187 and E190 each coordinate Zn(2+). A disulfide bridge connects residues C252 and C275. H311 lines the Zn(2+) pocket. Catalysis depends on E386, which acts as the Proton donor/acceptor.

This sequence belongs to the peptidase M14 family. It depends on Zn(2+) as a cofactor.

The protein resides in the secreted. The sequence is that of Zinc carboxypeptidase A 1 from Drosophila melanogaster (Fruit fly).